Consider the following 244-residue polypeptide: MLVEARKKLIFALDVESGASAEEWVRRLRGKVGVFKVGKQLFTRCGPDVVRMIRDHGGEVFLDLKFHDIPNTVAKAAIEACRLGVRMFNVHALGGRAMMAGAAEAVREYFAAGEDVPPLLLGVTILTSSSEETLREVGVDRPVEEMVPRLACLAKGAGLDGVVASPREVGLIRRACGRDFAIVTPGVRPSFAETNDQQRIMTPGEAIAAGSDFLVVGRPIAASEDPVGAAQRIVEEMAAALEEG.

Residues D14, K36, 63-72 (DLKFHDIPNT), T127, R188, Q197, G217, and R218 each bind substrate. K65 serves as the catalytic Proton donor.

This sequence belongs to the OMP decarboxylase family. Type 1 subfamily. Homodimer.

It catalyses the reaction orotidine 5'-phosphate + H(+) = UMP + CO2. The protein operates within pyrimidine metabolism; UMP biosynthesis via de novo pathway; UMP from orotate: step 2/2. Its function is as follows. Catalyzes the decarboxylation of orotidine 5'-monophosphate (OMP) to uridine 5'-monophosphate (UMP). This chain is Orotidine 5'-phosphate decarboxylase, found in Syntrophotalea carbinolica (strain DSM 2380 / NBRC 103641 / GraBd1) (Pelobacter carbinolicus).